Reading from the N-terminus, the 481-residue chain is tRNA-2-methylthio-N(6)-dimethylallyladenosine synthase (481 aa).

Residues 24-140 (KKLFIESYGC…LPNLLAEVEE (117 aa)) form the MTTase N-terminal domain. [4Fe-4S] cluster is bound by residues C33, C69, C103, C178, C182, and C185. Residues 164–411 (MSNGITALVS…DLQQKHAWFR (248 aa)) enclose the Radical SAM core domain. The TRAM domain maps to 413–476 (EEFVGKTVEV…SGTLKGEAVG (64 aa)).

It belongs to the methylthiotransferase family. MiaB subfamily. In terms of assembly, monomer. [4Fe-4S] cluster serves as cofactor.

Its subcellular location is the cytoplasm. It carries out the reaction N(6)-dimethylallyladenosine(37) in tRNA + (sulfur carrier)-SH + AH2 + 2 S-adenosyl-L-methionine = 2-methylsulfanyl-N(6)-dimethylallyladenosine(37) in tRNA + (sulfur carrier)-H + 5'-deoxyadenosine + L-methionine + A + S-adenosyl-L-homocysteine + 2 H(+). In terms of biological role, catalyzes the methylthiolation of N6-(dimethylallyl)adenosine (i(6)A), leading to the formation of 2-methylthio-N6-(dimethylallyl)adenosine (ms(2)i(6)A) at position 37 in tRNAs that read codons beginning with uridine. This Flavobacterium johnsoniae (strain ATCC 17061 / DSM 2064 / JCM 8514 / BCRC 14874 / CCUG 350202 / NBRC 14942 / NCIMB 11054 / UW101) (Cytophaga johnsonae) protein is tRNA-2-methylthio-N(6)-dimethylallyladenosine synthase.